Consider the following 233-residue polypeptide: Probable transglycosylase IsaA (233 aa).

The signal sequence occupies residues 1 to 29 (MKKTIMASSLAVALGVTGYAAGTGHQAHA).

It belongs to the transglycosylase family. IsaA subfamily.

The protein resides in the secreted. In terms of biological role, is able to cleave peptidoglycan. The protein is Probable transglycosylase IsaA (isaA) of Staphylococcus aureus (strain USA300).